A 199-amino-acid polypeptide reads, in one-letter code: MKFSPLLDELIQSLRCLPGVGPKSAQRMAFQLLERDRKAGLKLASALSSAMSDIGHCQSCRTYTEESLCPICASHKRGSSSTICVVETPADVLAIEAGGHFSGRYFVLLGHLSPLDGVGPEELGLALLERHLASGDVAELILATNPTVEGEATAHFIADMARRHKVVISRIAHGVPVGGELEYVDSTTLALSFNGRIPL.

Residues 57 to 72 form a C4-type zinc finger; that stretch reads CQSCRTYTEESLCPIC. One can recognise a Toprim domain in the interval 81-176; the sequence is STICVVETPA…VISRIAHGVP (96 aa).

Belongs to the RecR family.

May play a role in DNA repair. It seems to be involved in an RecBC-independent recombinational process of DNA repair. It may act with RecF and RecO. This Shewanella sp. (strain MR-4) protein is Recombination protein RecR.